The sequence spans 1319 residues: ERAD-associated E3 ubiquitin-protein ligase DOA10 (1319 aa).

M1 is subject to N-acetylmethionine. The Cytoplasmic portion of the chain corresponds to 1–131 (MDVDSDVNVS…LTFFEKARLA (131 aa)). The RING-CH-type zinc-finger motif lies at 31-100 (DDAPSGATCR…DICHYPIQFK (70 aa)). 8 residues coordinate Zn(2+): C39, C42, C56, C58, H66, C69, C90, and C93. A helical transmembrane segment spans residues 132–152 (LTIGLAAVLYIIGVPLVWNMF). Over 153–203 (GKLYTMMLDGSSPYPGDFLKSLIYGYDQSATPELTTRAIFYQLLQNHSFTS) the chain is Lumenal. The helical transmembrane segment at 204 to 224 (LQFIMIVILHIALYFQYDMIV) threads the bilayer. Residues 225-468 (REDVFSKMVF…GPLVINLKLK (244 aa)) lie on the Cytoplasmic side of the membrane. Positions 291 to 306 (ADNNNNVINPRNDNVP) are enriched in low complexity. Disordered stretches follow at residues 291–315 (ADNNNNVINPRNDNVPPQDPNDHRN) and 329–381 (EATE…EADY). A helical membrane pass occupies residues 469-489 (LLNVIAYFIIAVVFTAIYLAI). Topologically, residues 490–491 (SY) are lumenal. The helical transmembrane segment at 492-512 (LFPTFIGFGLLKIYFGIFKVI) threads the bilayer. Topologically, residues 513–626 (LRGLCHLYYL…LFALKCTFKV (114 aa)) are cytoplasmic. Residues 627–647 (FTLFFIELAGFPILAGVMLDF) form a helical membrane-spanning segment. Topologically, residues 648 to 660 (SLFCPILASNSRM) are lumenal. A helical membrane pass occupies residues 661 to 681 (LWVPSICAIWPPFSLFVYWTI). At 682-739 (GTLYMYWFAKYIGMIRKNIIRPGVLFFIRSPEDPNIKILHDSLIHPMSIQLSRLCLSM) the chain is on the cytoplasmic side. The helical transmembrane segment at 740–760 (FIYAIFIVLGFGFHTRIFFPF) threads the bilayer. Residues 761–777 (MLKSNLLSVPEAYKPTS) lie on the Lumenal side of the membrane. Residues 778–797 (IISWKFNTILLTLYFTKRIL) traverse the membrane as a helical segment. Over 798–965 (ESSSYVKPLL…YVPPDFRLRY (168 aa)) the chain is Cytoplasmic. The chain crosses the membrane as a helical span at residues 966 to 986 (MTLLGLVWLFASILMLGVTFI). The Lumenal segment spans residues 987 to 1019 (SQALINFVCSFGFLPVVKLLLGERNKVYVAWKE). A helical transmembrane segment spans residues 1020–1040 (LSDISYSYLNIYYVCVGSVCL). Residues 1041–1113 (SKIAKDILHF…IFDSMLVKYN (73 aa)) lie on the Cytoplasmic side of the membrane. Residues 1114–1134 (LMVFIAIMIAVIRTMVSWVVL) form a helical membrane-spanning segment. Over 1135 to 1168 (TDGILACYNYLTIRVFGNSSYTIGNSKWFKYDES) the chain is Lumenal. A helical membrane pass occupies residues 1169-1189 (LLFVVWIISSMVNFGTGYKSL). Residues 1190–1213 (KLFFRNRNTSKLNFLKTMALELFK) lie on the Cytoplasmic side of the membrane. The chain crosses the membrane as a helical span at residues 1214-1234 (QGFLHMVIYVLPIIILSLVFL). Over 1235–1270 (RDVSTKQIIDISHGSRSFTLSLNESFPTWTRMQDIY) the chain is Lumenal. A helical transmembrane segment spans residues 1271–1291 (FGLLIALESFTFFFQATVLFI). Topologically, residues 1292-1319 (QWFKSTVQNVKDEVYTKGRALENLPDES) are cytoplasmic.

It belongs to the DOA10/MARCH6 family. In terms of assembly, component of the DOA10 ubiquitin ligase complex which contains E3 ligase SSM4/DOA10 and CDC48-binding protein UBX2/SEL1. The DOA10 complex interacts with the heterotrimeric CDC48-NPL4-UFD1 ATPase complex which is recruited by UBX2/SEL1 via its interaction with CDC48. Interacts with its associated ubiquitin conjugating enzymes UBC6 and UBC7 with its membrane anchor CUE1. Interacts with PEX29.

The protein localises to the endoplasmic reticulum membrane. It is found in the nucleus inner membrane. It carries out the reaction S-ubiquitinyl-[E2 ubiquitin-conjugating enzyme]-L-cysteine + [acceptor protein]-L-lysine = [E2 ubiquitin-conjugating enzyme]-L-cysteine + N(6)-ubiquitinyl-[acceptor protein]-L-lysine.. It functions in the pathway protein modification; protein ubiquitination. Functionally, E3 ubiquitin-protein ligase which accepts ubiquitin specifically from endoplasmic reticulum-associated UBC6 and UBC7 E2 ligases, and transfers it to substrates promoting their degradation. Mediates the degradation of a broad range of substrates, including endoplasmic reticulum membrane proteins (ERQC), soluble nuclear proteins and soluble cytoplasmic proteins (CytoQC). Component of the DOA10 ubiquitin ligase complex, which is part of the ERAD-C pathway responsible for the rapid degradation of membrane proteins with misfolded cytoplasmic domains. ERAD-C substrates are ubiquitinated through DOA10 in conjunction with the E2 ubiquitin-conjugating enzymes UBC6 and UBC7-CUE1. Ubiquitinated substrates are then removed to the cytosol via the action of the UFD1-NPL4-CDC48/p97 (UNC) AAA ATPase complex and targeted to the proteasome. Also recognizes the N-terminally acetylated residue of proteins as degradation signal (degron). N-terminally acetylated target proteins include MATALPHA2, TBF1, SLK19, YMR090W, HIS3, HSP104, UBP6 and ARO8. Catalyzes ubiquitination of mislocalized tail-anchored proteins that are extracted from the mitochondrion membrane by MSP1: following extraction, mistargeted proteins are transferred to the endoplasmic reticulum, where they are ubiquitinated by DOA10 and degraded by the proteasome. This is ERAD-associated E3 ubiquitin-protein ligase DOA10 (SSM4) from Saccharomyces cerevisiae (strain ATCC 204508 / S288c) (Baker's yeast).